Consider the following 410-residue polypeptide: LanC-like protein GCR2 (410 aa).

Residues Cys-283, Cys-328, and His-329 each contribute to the Zn(2+) site.

Belongs to the LanC-like protein family. May interact (via C-terminus) with GPA1.

Its function is as follows. May play a role in abscisic acid (ABA) signaling. This Arabidopsis thaliana (Mouse-ear cress) protein is LanC-like protein GCR2 (GCR2).